Reading from the N-terminus, the 401-residue chain is Arylacetamide deacetylase-like 2 (401 aa).

An N-terminal signal peptide occupies residues 1–18; it reads MGLKALCLGLLCVLFVSH. Positions 111-113 match the Involved in the stabilization of the negatively charged intermediate by the formation of the oxyanion hole motif; the sequence is HGG. Cys-116 and Cys-338 are joined by a disulfide. Catalysis depends on residues Ser-189, Asp-341, and His-371.

This sequence belongs to the 'GDXG' lipolytic enzyme family.

It localises to the secreted. The sequence is that of Arylacetamide deacetylase-like 2 (AADACL2) from Homo sapiens (Human).